Reading from the N-terminus, the 205-residue chain is Lymphotoxin-alpha (205 aa).

The N-terminal stretch at 1-34 (MTPPGRLYLPRVRGTRLLFLLLGLLLALPPRAKG) is a signal peptide. A THD domain is found at 63 to 205 (PAAHLVGDPS…SSVFFGAFAL (143 aa)). N-linked (GlcNAc...) asparagine glycosylation occurs at Asn96. A disulfide bond links Cys120 and Cys156.

The protein belongs to the tumor necrosis factor family. In terms of assembly, homotrimer, and heterotrimer of either two LTB and one LTA subunits or (less prevalent) two LTA and one LTB subunits. Interacts with TNFRSF14.

Its subcellular location is the secreted. It localises to the membrane. Functionally, cytokine that in its homotrimeric form binds to TNFRSF1A/TNFR1, TNFRSF1B/TNFBR and TNFRSF14/HVEM. In its heterotrimeric form with LTB binds to TNFRSF3/LTBR. Lymphotoxin is produced by lymphocytes and is cytotoxic for a wide range of tumor cells in vitro and in vivo. This chain is Lymphotoxin-alpha (LTA), found in Marmota monax (Woodchuck).